Here is a 296-residue protein sequence, read N- to C-terminus: tRNA U34 carboxymethyltransferase (296 aa).

Carboxy-S-adenosyl-L-methionine-binding positions include K64, W78, K83, G102, 124-126, 151-152, Y171, and R286; these read DPS and VE.

It belongs to the class I-like SAM-binding methyltransferase superfamily. CmoB family. As to quaternary structure, homotetramer.

The catalysed reaction is carboxy-S-adenosyl-L-methionine + 5-hydroxyuridine(34) in tRNA = 5-carboxymethoxyuridine(34) in tRNA + S-adenosyl-L-homocysteine + H(+). Its function is as follows. Catalyzes carboxymethyl transfer from carboxy-S-adenosyl-L-methionine (Cx-SAM) to 5-hydroxyuridine (ho5U) to form 5-carboxymethoxyuridine (cmo5U) at position 34 in tRNAs. In Sulfurimonas denitrificans (strain ATCC 33889 / DSM 1251) (Thiomicrospira denitrificans (strain ATCC 33889 / DSM 1251)), this protein is tRNA U34 carboxymethyltransferase.